The chain runs to 475 residues: Trifunctional enzyme subunit beta, mitochondrial (475 aa).

Residues 1-34 (MTTILTSTFRNLSTTSKWALRSSIRPLSCSSQLH) constitute a mitochondrion transit peptide. Lys-53 is modified (N6-succinyllysine). Lys-73 carries the post-translational modification N6-acetyllysine; alternate. At Lys-73 the chain carries N6-succinyllysine; alternate. Cys-139 functions as the Acyl-thioester intermediate in the catalytic mechanism. The stretch at 174–221 (IRHSRNMRKMMLDLNKAKTLGQRLSLLSKFRLNFLSPELPAVAEFSTN) is an intramembrane region. Lys-189 bears the N6-acetyllysine; alternate mark. An N6-succinyllysine; alternate modification is found at Lys-189. Lys-191, Lys-273, and Lys-292 each carry N6-succinyllysine. Position 294 is an N6-acetyllysine; alternate (Lys-294). Lys-294 is subject to N6-succinyllysine; alternate. Position 299 is an N6-acetyllysine (Lys-299). The residue at position 333 (Lys-333) is an N6-acetyllysine; alternate. Lys-333 carries the post-translational modification N6-succinyllysine; alternate. Lys-349 and Lys-362 each carry N6-acetyllysine. The active-site Proton donor/acceptor is Cys-459.

The protein belongs to the thiolase-like superfamily. Thiolase family. As to quaternary structure, heterotetramer of 2 alpha/HADHA and 2 beta/HADHB subunits; forms the mitochondrial trifunctional enzyme. Also purified as higher order heterooligomers including a 4 alpha/HADHA and 4 beta/HADHB heterooligomer which physiological significance remains unclear. The mitochondrial trifunctional enzyme interacts with MTLN. Interacts with RSAD2/viperin. In terms of processing, acetylation of Lys-202 is observed in liver mitochondria from fasted mice but not from fed mice.

The protein resides in the mitochondrion. It localises to the mitochondrion inner membrane. Its subcellular location is the mitochondrion outer membrane. It is found in the endoplasmic reticulum. The catalysed reaction is an acyl-CoA + acetyl-CoA = a 3-oxoacyl-CoA + CoA. The enzyme catalyses butanoyl-CoA + acetyl-CoA = 3-oxohexanoyl-CoA + CoA. It catalyses the reaction hexanoyl-CoA + acetyl-CoA = 3-oxooctanoyl-CoA + CoA. It carries out the reaction octanoyl-CoA + acetyl-CoA = 3-oxodecanoyl-CoA + CoA. The catalysed reaction is decanoyl-CoA + acetyl-CoA = 3-oxododecanoyl-CoA + CoA. The enzyme catalyses dodecanoyl-CoA + acetyl-CoA = 3-oxotetradecanoyl-CoA + CoA. It catalyses the reaction tetradecanoyl-CoA + acetyl-CoA = 3-oxohexadecanoyl-CoA + CoA. Its pathway is lipid metabolism; fatty acid beta-oxidation. In terms of biological role, mitochondrial trifunctional enzyme catalyzes the last three of the four reactions of the mitochondrial beta-oxidation pathway. The mitochondrial beta-oxidation pathway is the major energy-producing process in tissues and is performed through four consecutive reactions breaking down fatty acids into acetyl-CoA. Among the enzymes involved in this pathway, the trifunctional enzyme exhibits specificity for long-chain fatty acids. Mitochondrial trifunctional enzyme is a heterotetrameric complex composed of two proteins, the trifunctional enzyme subunit alpha/HADHA carries the 2,3-enoyl-CoA hydratase and the 3-hydroxyacyl-CoA dehydrogenase activities, while the trifunctional enzyme subunit beta/HADHB described here bears the 3-ketoacyl-CoA thiolase activity. The sequence is that of Trifunctional enzyme subunit beta, mitochondrial (Hadhb) from Mus musculus (Mouse).